A 308-amino-acid polypeptide reads, in one-letter code: Hydroxyacylglutathione hydrolase, mitochondrial (308 aa).

The transit peptide at 1–13 (MVVGRGLLGRRSL) directs the protein to the mitochondrion. Residues His-102, His-104, Asp-106, and His-107 each coordinate Zn(2+). The residue at position 116 (Lys-116) is an N6-acetyllysine. The Zn(2+) site is built by His-158 and Asp-182. Substrate contacts are provided by residues 191 to 193 (KFY) and 221 to 223 (HEY). His-221 contributes to the Zn(2+) binding site. Lys-229 bears the N6-acetyllysine; alternate mark. Position 229 is an N6-succinyllysine; alternate (Lys-229). 297–300 (RREK) is a substrate binding site.

Belongs to the metallo-beta-lactamase superfamily. Glyoxalase II family. As to quaternary structure, monomer. Zn(2+) serves as cofactor. In terms of tissue distribution, expressed in liver and kidney.

The protein localises to the mitochondrion matrix. It is found in the cytoplasm. It carries out the reaction an S-(2-hydroxyacyl)glutathione + H2O = a 2-hydroxy carboxylate + glutathione + H(+). The enzyme catalyses (R)-S-lactoylglutathione + H2O = (R)-lactate + glutathione + H(+). It functions in the pathway secondary metabolite metabolism; methylglyoxal degradation; (R)-lactate from methylglyoxal: step 2/2. Functionally, thiolesterase that catalyzes the hydrolysis of S-D-lactoyl-glutathione to form glutathione and D-lactic acid. This chain is Hydroxyacylglutathione hydrolase, mitochondrial (HAGH), found in Homo sapiens (Human).